The following is a 90-amino-acid chain: Acylphosphatase (90 aa).

The 88-residue stretch at 3–90 (QRQFTVYGCV…RVFSDFTIER (88 aa)) folds into the Acylphosphatase-like domain. Active-site residues include arginine 18 and asparagine 36.

This sequence belongs to the acylphosphatase family.

The enzyme catalyses an acyl phosphate + H2O = a carboxylate + phosphate + H(+). The polypeptide is Acylphosphatase (acyP) (Actinobacillus succinogenes (strain ATCC 55618 / DSM 22257 / CCUG 43843 / 130Z)).